The primary structure comprises 193 residues: 3-isopropylmalate dehydratase small subunit (193 aa).

The protein belongs to the LeuD family. LeuD type 1 subfamily. As to quaternary structure, heterodimer of LeuC and LeuD.

The enzyme catalyses (2R,3S)-3-isopropylmalate = (2S)-2-isopropylmalate. It participates in amino-acid biosynthesis; L-leucine biosynthesis; L-leucine from 3-methyl-2-oxobutanoate: step 2/4. Functionally, catalyzes the isomerization between 2-isopropylmalate and 3-isopropylmalate, via the formation of 2-isopropylmaleate. The protein is 3-isopropylmalate dehydratase small subunit of Bacillus anthracis (strain CDC 684 / NRRL 3495).